The sequence spans 114 residues: Iron-sulfur cluster assembly protein CyaY (114 aa).

Belongs to the frataxin family.

Involved in iron-sulfur (Fe-S) cluster assembly. May act as a regulator of Fe-S biogenesis. The chain is Iron-sulfur cluster assembly protein CyaY from Ralstonia pickettii (strain 12J).